We begin with the raw amino-acid sequence, 129 residues long: MWLSDLQKIGVGTTALGFLFMIMGIFMFFDGPLLSLGNLLLVFGFFMIAGFSKSVSFFLRKDRMLGSISFFSGLLLTLFHFPIIGFFVECLGFFNLFKVFYPLIISFLRTVPYIGPYIDRLTSYQQSPV.

Residues 1 to 8 are Cytoplasmic-facing; the sequence is MWLSDLQK. The chain crosses the membrane as a helical span at residues 9–29; that stretch reads IGVGTTALGFLFMIMGIFMFF. A topological domain (lumenal) is located at residue Asp-30. A helical transmembrane segment spans residues 31 to 51; the sequence is GPLLSLGNLLLVFGFFMIAGF. The Cytoplasmic segment spans residues 52–67; it reads SKSVSFFLRKDRMLGS. The chain crosses the membrane as a helical span at residues 68 to 88; it reads ISFFSGLLLTLFHFPIIGFFV. Residues 89–90 lie on the Lumenal side of the membrane; sequence EC. The helical transmembrane segment at 91–111 threads the bilayer; that stretch reads LGFFNLFKVFYPLIISFLRTV. At 112–129 the chain is on the cytoplasmic side; that stretch reads PYIGPYIDRLTSYQQSPV.

This sequence belongs to the GOT1 family.

The protein resides in the golgi apparatus membrane. In terms of biological role, nonessential protein required for the fusion of ER-derived transport vesicles with the Golgi complex. Can be replaced by sft2. The chain is Protein transport protein got1 (got1) from Schizosaccharomyces pombe (strain 972 / ATCC 24843) (Fission yeast).